Here is a 190-residue protein sequence, read N- to C-terminus: MPTRRGCSGPCHFLASAFVLLLLPALNQSVVLPSTVPRAVQESKPLEPGPRTLSPLPPGPTAAQPRGQAQSEGAGPRGAESRNGSIPGAASEADGPEGKAGESSLGGSLAVSPNPSDKPMTQRALTVLVVVSAAVLVYFVVRTVRMRRRNRKTRRYGVLDTNIENMELTPLEQDDEDDDNTLFDANHPRR.

An N-terminal signal peptide occupies residues 1–29; the sequence is MPTRRGCSGPCHFLASAFVLLLLPALNQS. Asn-27 and Asn-83 each carry an N-linked (GlcNAc...) asparagine glycan. The Extracellular segment spans residues 30–123; it reads VVLPSTVPRA…NPSDKPMTQR (94 aa). A disordered region spans residues 37 to 119; sequence PRAVQESKPL…AVSPNPSDKP (83 aa). Residues 124-144 form a helical membrane-spanning segment; that stretch reads ALTVLVVVSAAVLVYFVVRTV. At 145 to 190 the chain is on the cytoplasmic side; that stretch reads RMRRRNRKTRRYGVLDTNIENMELTPLEQDDEDDDNTLFDANHPRR. Residues 168–190 form a disordered region; sequence LTPLEQDDEDDDNTLFDANHPRR. Residues 172–181 are compositionally biased toward acidic residues; the sequence is EQDDEDDDNT.

Belongs to the FAM174 family.

Its subcellular location is the membrane. This Rattus norvegicus (Rat) protein is Membrane protein FAM174A (Fam174a).